The chain runs to 93 residues: Large ribosomal subunit protein uL23 (93 aa).

Belongs to the universal ribosomal protein uL23 family. In terms of assembly, part of the 50S ribosomal subunit. Contacts protein L29, and trigger factor when it is bound to the ribosome.

One of the early assembly proteins it binds 23S rRNA. One of the proteins that surrounds the polypeptide exit tunnel on the outside of the ribosome. Forms the main docking site for trigger factor binding to the ribosome. This chain is Large ribosomal subunit protein uL23, found in Campylobacter curvus (strain 525.92).